The chain runs to 127 residues: Small ribosomal subunit protein uS11 (127 aa).

It belongs to the universal ribosomal protein uS11 family. As to quaternary structure, part of the 30S ribosomal subunit. Interacts with proteins S7 and S18. Binds to IF-3.

Located on the platform of the 30S subunit, it bridges several disparate RNA helices of the 16S rRNA. Forms part of the Shine-Dalgarno cleft in the 70S ribosome. The protein is Small ribosomal subunit protein uS11 of Nitrosococcus oceani (strain ATCC 19707 / BCRC 17464 / JCM 30415 / NCIMB 11848 / C-107).